The chain runs to 30 residues: Cyclotide psyleio E (30 aa).

Positions 1–30 (SVTPIVCGETCFGGTCNTPGCSCSWPICTK) form a cross-link, cyclopeptide (Ser-Lys). Disulfide bonds link C7/C21, C11/C23, and C16/C28.

This is a cyclic peptide.

In terms of biological role, probably participates in a plant defense mechanism. In Psychotria leiocarpa, this protein is Cyclotide psyleio E.